Consider the following 216-residue polypeptide: uncharacterized protein (216 aa).

A run of 4 helical transmembrane segments spans residues 5-27, 98-120, 125-147, and 185-207; these read ISLI…IAFS, FLSF…VFLL, VLIW…TFTN, and GTLF…GILG.

Its subcellular location is the cell membrane. This is an uncharacterized protein from Aquifex aeolicus (strain VF5).